The following is a 75-amino-acid chain: RNA-binding protein KhpA (75 aa).

The KH domain occupies S29–I75.

Belongs to the KhpA RNA-binding protein family. Forms a complex with KhpB.

Its subcellular location is the cytoplasm. Functionally, a probable RNA chaperone. Forms a complex with KhpB which binds to cellular RNA and controls its expression. Plays a role in peptidoglycan (PG) homeostasis and cell length regulation. In Clostridium acetobutylicum (strain ATCC 824 / DSM 792 / JCM 1419 / IAM 19013 / LMG 5710 / NBRC 13948 / NRRL B-527 / VKM B-1787 / 2291 / W), this protein is RNA-binding protein KhpA.